We begin with the raw amino-acid sequence, 226 residues long: MTILVVTGTGTGVGKTVVCAALASAARQAGIDVAVCKPVQTGTARGDDDLAEVGRLAGVTQLAGLARYPQPMAPAAAAEHAGMALPARDQIVRLIADLDRPGRLTLVEGAGGLLVELAEPGVTLRDVAVDVAAVALVVVTADLGTLNHTKLTLEALAAQQVSCAGLVIGSWPDPPGLVAASNRSALARIATVRAALPAGAASLDAGDFAAMSAAAFDRNWVAGLVG.

12-17 contacts ATP; it reads GVGKTV. A Mg(2+)-binding site is contributed by T16. K37 is an active-site residue. Residue T41 coordinates substrate. ATP is bound by residues D49, 108–111, 169–170, and 197–199; these read EGAG, GS, and PAG. Residues D49 and E108 each contribute to the Mg(2+) site.

It belongs to the dethiobiotin synthetase family. In terms of assembly, homodimer. Requires Mg(2+) as cofactor.

The protein localises to the cytoplasm. It carries out the reaction (7R,8S)-7,8-diammoniononanoate + CO2 + ATP = (4R,5S)-dethiobiotin + ADP + phosphate + 3 H(+). It functions in the pathway cofactor biosynthesis; biotin biosynthesis; biotin from 7,8-diaminononanoate: step 1/2. Catalyzes a mechanistically unusual reaction, the ATP-dependent insertion of CO2 between the N7 and N8 nitrogen atoms of 7,8-diaminopelargonic acid (DAPA, also called 7,8-diammoniononanoate) to form a ureido ring. The chain is ATP-dependent dethiobiotin synthetase BioD from Mycobacterium bovis (strain BCG / Pasteur 1173P2).